Reading from the N-terminus, the 437-residue chain is MTTFSPREIVSELDRYIVGQADAKRAVAIALRNRWRRQQLQGPLREEVAPKNILMIGPTGCGKTEISRRLARLANAPFLKVEATKFTEVGYVGRDVEQIVRDLVEVGIGLKRDEKRRSVQAKAEAAAEARILDALVGPTASQATRDSFRRRLRAGELDDKEVELELAGSATAGLPMFEIPGMPGAAMGAINLGDMLGKALGGQRGRPRRITVRDAHAPLMTEESDKLLDQDTIIQEAIREVEDNGIVFLDEVDKICAREGRGGADVSREGVQRDLLPLIEGTTVATKYGPVKTDHILFIASGAFHVSKPSDLLPELQGRLPIRVELAPLTVDDFRRILTETEASLLKQAVALMATEGVTVTFTDDAVDALARVAVDVNSSVENIGARRLQTVLERVLDEISFAAPDRSGEIVTIDAAYVRERVESLAQNADLSRFIL.

ATP contacts are provided by residues V18, 60-65 (GCGKTE), D250, E315, and R387.

It belongs to the ClpX chaperone family. HslU subfamily. A double ring-shaped homohexamer of HslV is capped on each side by a ring-shaped HslU homohexamer. The assembly of the HslU/HslV complex is dependent on binding of ATP.

The protein resides in the cytoplasm. In terms of biological role, ATPase subunit of a proteasome-like degradation complex; this subunit has chaperone activity. The binding of ATP and its subsequent hydrolysis by HslU are essential for unfolding of protein substrates subsequently hydrolyzed by HslV. HslU recognizes the N-terminal part of its protein substrates and unfolds these before they are guided to HslV for hydrolysis. The sequence is that of ATP-dependent protease ATPase subunit HslU from Methylobacterium nodulans (strain LMG 21967 / CNCM I-2342 / ORS 2060).